The sequence spans 281 residues: Bifunctional protein FolD (281 aa).

NADP(+)-binding positions include 165-167 (GRG), T192, and V233.

This sequence belongs to the tetrahydrofolate dehydrogenase/cyclohydrolase family. As to quaternary structure, homodimer.

It carries out the reaction (6R)-5,10-methylene-5,6,7,8-tetrahydrofolate + NADP(+) = (6R)-5,10-methenyltetrahydrofolate + NADPH. The enzyme catalyses (6R)-5,10-methenyltetrahydrofolate + H2O = (6R)-10-formyltetrahydrofolate + H(+). It participates in one-carbon metabolism; tetrahydrofolate interconversion. Functionally, catalyzes the oxidation of 5,10-methylenetetrahydrofolate to 5,10-methenyltetrahydrofolate and then the hydrolysis of 5,10-methenyltetrahydrofolate to 10-formyltetrahydrofolate. The sequence is that of Bifunctional protein FolD from Corynebacterium diphtheriae (strain ATCC 700971 / NCTC 13129 / Biotype gravis).